The chain runs to 373 residues: Phospho-N-acetylmuramoyl-pentapeptide-transferase (373 aa).

10 helical membrane-spanning segments follow: residues 34–54 (GALF…ISSL), 78–98 (TPTM…LLWA), 100–120 (LANV…AIGF), 141–161 (LGLE…TALS), 181–201 (FMLN…VSAG), 212–232 (GLAI…AYLA), 252–272 (LAVV…FNAP), 275–295 (AIFM…TVAV), 301–321 (IVMA…IIQV), and 350–370 (QVVV…LSTL).

This sequence belongs to the glycosyltransferase 4 family. MraY subfamily. Requires Mg(2+) as cofactor.

Its subcellular location is the cell inner membrane. It carries out the reaction UDP-N-acetyl-alpha-D-muramoyl-L-alanyl-gamma-D-glutamyl-meso-2,6-diaminopimeloyl-D-alanyl-D-alanine + di-trans,octa-cis-undecaprenyl phosphate = di-trans,octa-cis-undecaprenyl diphospho-N-acetyl-alpha-D-muramoyl-L-alanyl-D-glutamyl-meso-2,6-diaminopimeloyl-D-alanyl-D-alanine + UMP. The protein operates within cell wall biogenesis; peptidoglycan biosynthesis. In terms of biological role, catalyzes the initial step of the lipid cycle reactions in the biosynthesis of the cell wall peptidoglycan: transfers peptidoglycan precursor phospho-MurNAc-pentapeptide from UDP-MurNAc-pentapeptide onto the lipid carrier undecaprenyl phosphate, yielding undecaprenyl-pyrophosphoryl-MurNAc-pentapeptide, known as lipid I. The sequence is that of Phospho-N-acetylmuramoyl-pentapeptide-transferase from Rhizobium rhizogenes (strain K84 / ATCC BAA-868) (Agrobacterium radiobacter).